The sequence spans 717 residues: Polyribonucleotide nucleotidyltransferase (717 aa).

Asp496 and Asp502 together coordinate Mg(2+). The region spanning 563-622 is the KH domain; sequence PRLLSFKIDPEMIGLVIGPGGKTIKGITEETGVKIDIDDDGTVTIAAADGEKAKQACNII. Positions 632 to 700 constitute an S1 motif domain; the sequence is GDVYVGRVTR…SKGRVNLTRL (69 aa).

This sequence belongs to the polyribonucleotide nucleotidyltransferase family. Mg(2+) is required as a cofactor.

The protein localises to the cytoplasm. It carries out the reaction RNA(n+1) + phosphate = RNA(n) + a ribonucleoside 5'-diphosphate. Functionally, involved in mRNA degradation. Catalyzes the phosphorolysis of single-stranded polyribonucleotides processively in the 3'- to 5'-direction. The polypeptide is Polyribonucleotide nucleotidyltransferase (Trichodesmium erythraeum (strain IMS101)).